We begin with the raw amino-acid sequence, 204 residues long: Large ribosomal subunit protein eL15 (204 aa).

2 disordered regions span residues 71–91 and 159–182; these read RKRP…GVNQ and REMR…HYSQ. Residues 159-174 are compositionally biased toward basic residues; that stretch reads REMRGKTSAGRKHRGL.

It belongs to the eukaryotic ribosomal protein eL15 family.

The chain is Large ribosomal subunit protein eL15 (RPL15) from Faxonius limosus (Spinycheek crayfish).